The primary structure comprises 107 residues: Phosphoribosyl-ATP pyrophosphatase (107 aa).

It belongs to the PRA-PH family.

The protein resides in the cytoplasm. The enzyme catalyses 1-(5-phospho-beta-D-ribosyl)-ATP + H2O = 1-(5-phospho-beta-D-ribosyl)-5'-AMP + diphosphate + H(+). It participates in amino-acid biosynthesis; L-histidine biosynthesis; L-histidine from 5-phospho-alpha-D-ribose 1-diphosphate: step 2/9. In Bacillus cereus (strain AH187), this protein is Phosphoribosyl-ATP pyrophosphatase.